Reading from the N-terminus, the 415-residue chain is Phakinin (415 aa).

The tract at residues 1–26 (MSTRRVVVDAPAGASSSMPLQRHKAS) is disordered. N-acetylserine is present on Ser-2. Residues 2 to 114 (STRRVVVDAP…LGAVEDLGGC (113 aa)) form a head region. Phosphoserine is present on residues Ser-26, Ser-32, and Ser-35. Thr-53 is subject to Phosphothreonine. Ser-90 and Ser-100 each carry phosphoserine. Positions 104-415 (DLGAVEDLGG…HALLDREESS (312 aa)) constitute an IF rod domain. Coiled-coil stretches lie at residues 115-144 (LVEYMAKVHALEKVSQELEAQLRMHLESKA), 199-248 (RKAA…VKML), and 295-395 (QAKQ…LSHK). Positions 396-415 (CQLQRDVASYHALLDREESS) are tail.

This sequence belongs to the intermediate filament family. As to quaternary structure, part of a complex required for lens intermediate filament formation composed of BFSP1, BFSP2 and CRYAA. Found in a complex composed of PPL (via C-terminal linker domain), BFSP1 and BFSP2 in the retinal lens. Within the complex interacts with PPL (via C-terminal linker domain) and with BFSP1. Identified in a complex that contains VIM, EZR, AHNAK, BFSP1, BFSP2, ANK2, PLEC, PRX and spectrin. Interacts with LGSN. Interacts with VIM. Abundantly expressed in both the inner and outer cortex of the retina, expressed at a lower level in the nucleus of the retina (at protein level). Detected in eye lens fiber cells (at protein level).

The protein localises to the cell membrane. The protein resides in the cytoplasm. It localises to the cytoskeleton. It is found in the cell cortex. Required for the correct formation of lens intermediate filaments as part of a complex composed of BFSP1, BFSP2 and CRYAA. Plays a role in maintenance of retinal lens optical clarity. The chain is Phakinin (BFSP2) from Bos taurus (Bovine).